A 355-amino-acid polypeptide reads, in one-letter code: NADH dehydrogenase [ubiquinone] 1 alpha subcomplex subunit 10, mitochondrial (355 aa).

A mitochondrion-targeting transit peptide spans 1-35; it reads MALRLLRLVPASASARGLAAGAQRVGRIHTSVHCK. Lys122 bears the N6-acetyllysine; alternate mark. Lys122 carries the post-translational modification N6-succinyllysine; alternate. Residue Ser250 is modified to Phosphoserine; by PINK1. At Lys285 the chain carries N6-succinyllysine.

This sequence belongs to the complex I NDUFA10 subunit family. In terms of assembly, complex I is composed of 45 different subunits. This a component of the hydrophobic protein fraction. The cofactor is FAD. Post-translationally, phosphorylation at Ser-250 by PINK1 is required for the binding and/or reduction of the complex I substrate ubiquinone. Expressed in the head and flagellum of epididymal sperm but not in testicular sperm (at protein level).

Its subcellular location is the mitochondrion matrix. Functionally, accessory subunit of the mitochondrial membrane respiratory chain NADH dehydrogenase (Complex I), that is believed not to be involved in catalysis. Complex I functions in the transfer of electrons from NADH to the respiratory chain. The immediate electron acceptor for the enzyme is believed to be ubiquinone. The chain is NADH dehydrogenase [ubiquinone] 1 alpha subcomplex subunit 10, mitochondrial (Ndufa10) from Rattus norvegicus (Rat).